A 212-amino-acid polypeptide reads, in one-letter code: uncharacterized protein (212 aa).

S-adenosyl-L-methionine is bound by residues Gly53, Glu74, and Asp97.

The protein belongs to the methyltransferase superfamily. YrrT family.

Functionally, could be a S-adenosyl-L-methionine-dependent methyltransferase. This is an uncharacterized protein from Bacillus cytotoxicus (strain DSM 22905 / CIP 110041 / 391-98 / NVH 391-98).